A 133-amino-acid chain; its full sequence is Thioredoxin H2 (133 aa).

Positions 1-22 (MGGALSTVFGSGEDATAAGTES) are disordered. The region spanning 6–133 (STVFGSGEDA…LEKKVSKLRA (128 aa)) is the Thioredoxin domain. Catalysis depends on nucleophile residues C59 and C62. A disulfide bridge connects residues C59 and C62.

It belongs to the thioredoxin family. Plant H-type subfamily. As to quaternary structure, interacts with MDH1.

Its subcellular location is the cytoplasm. It localises to the mitochondrion. Thiol-disulfide oxidoreductase probably involved in the redox regulation of a number of cytosolic enzymes. Possesses insulin disulfide bonds reducing activity. This Arabidopsis thaliana (Mouse-ear cress) protein is Thioredoxin H2 (TRX2).